We begin with the raw amino-acid sequence, 245 residues long: GTP cyclohydrolase 1 type 2 homolog (245 aa).

Positions 63, 64, 100, 213, and 217 each coordinate a divalent metal cation.

The protein belongs to the GTP cyclohydrolase I type 2/NIF3 family. In terms of assembly, homohexamer.

In Archaeoglobus fulgidus (strain ATCC 49558 / DSM 4304 / JCM 9628 / NBRC 100126 / VC-16), this protein is GTP cyclohydrolase 1 type 2 homolog.